A 242-amino-acid polypeptide reads, in one-letter code: 1-(5-phosphoribosyl)-5-[(5-phosphoribosylamino)methylideneamino] imidazole-4-carboxamide isomerase (242 aa).

Residue aspartate 8 is the Proton acceptor of the active site. Aspartate 129 serves as the catalytic Proton donor.

Belongs to the HisA/HisF family.

It localises to the cytoplasm. The catalysed reaction is 1-(5-phospho-beta-D-ribosyl)-5-[(5-phospho-beta-D-ribosylamino)methylideneamino]imidazole-4-carboxamide = 5-[(5-phospho-1-deoxy-D-ribulos-1-ylimino)methylamino]-1-(5-phospho-beta-D-ribosyl)imidazole-4-carboxamide. Its pathway is amino-acid biosynthesis; L-histidine biosynthesis; L-histidine from 5-phospho-alpha-D-ribose 1-diphosphate: step 4/9. The polypeptide is 1-(5-phosphoribosyl)-5-[(5-phosphoribosylamino)methylideneamino] imidazole-4-carboxamide isomerase (Clostridium botulinum (strain ATCC 19397 / Type A)).